The chain runs to 325 residues: Glycerol-3-phosphate dehydrogenase [NAD(P)+] (325 aa).

Positions 11, 30, and 103 each coordinate NADPH. Residues Lys103, Gly131, and Ser133 each contribute to the sn-glycerol 3-phosphate site. Residue Ala135 coordinates NADPH. 5 residues coordinate sn-glycerol 3-phosphate: Lys186, Asp242, Ser252, Arg253, and Asn254. Lys186 functions as the Proton acceptor in the catalytic mechanism. Arg253 contributes to the NADPH binding site. Val279 and Glu281 together coordinate NADPH.

Belongs to the NAD-dependent glycerol-3-phosphate dehydrogenase family.

The protein resides in the cytoplasm. The enzyme catalyses sn-glycerol 3-phosphate + NAD(+) = dihydroxyacetone phosphate + NADH + H(+). It catalyses the reaction sn-glycerol 3-phosphate + NADP(+) = dihydroxyacetone phosphate + NADPH + H(+). It functions in the pathway membrane lipid metabolism; glycerophospholipid metabolism. Catalyzes the reduction of the glycolytic intermediate dihydroxyacetone phosphate (DHAP) to sn-glycerol 3-phosphate (G3P), the key precursor for phospholipid synthesis. This chain is Glycerol-3-phosphate dehydrogenase [NAD(P)+], found in Wolbachia pipientis subsp. Culex pipiens (strain wPip).